The primary structure comprises 447 residues: Methionine aminopeptidase 2-2 (447 aa).

The segment at 1-89 is disordered; that stretch reads MAAQTAPELA…PRIPLTTLFP (89 aa). Residues 15–30 are compositionally biased toward polar residues; the sequence is NKNSGSAEANVVSNGG. A compositionally biased stretch (acidic residues) spans 34 to 47; that stretch reads DDAENEGDSDDDKD. Residues 59–73 are compositionally biased toward basic residues; that stretch reads KKKKKKRSKKKKKAA. His-197 provides a ligand contact to substrate. Residues Asp-217, Asp-228, and His-297 each contribute to the a divalent metal cation site. His-305 provides a ligand contact to substrate. A divalent metal cation is bound by residues Glu-333 and Glu-428.

It belongs to the peptidase M24A family. Methionine aminopeptidase eukaryotic type 2 subfamily. Co(2+) serves as cofactor. It depends on Zn(2+) as a cofactor. Requires Mn(2+) as cofactor. The cofactor is Fe(2+).

The protein localises to the cytoplasm. The catalysed reaction is Release of N-terminal amino acids, preferentially methionine, from peptides and arylamides.. Functionally, cotranslationally removes the N-terminal methionine from nascent proteins. The N-terminal methionine is often cleaved when the second residue in the primary sequence is small and uncharged (Met-Ala-, Cys, Gly, Pro, Ser, Thr, or Val). This Arthroderma otae (strain ATCC MYA-4605 / CBS 113480) (Microsporum canis) protein is Methionine aminopeptidase 2-2.